The sequence spans 367 residues: Glutamate 5-kinase (367 aa).

Position 10 (Lys10) interacts with ATP. Substrate contacts are provided by Ser50, Asp137, and Asn149. ATP-binding positions include 169–170 (TD) and 211–217 (TGGMGTK). Residues 275 to 353 (AGEITVDEGA…QQIDAILGYE (79 aa)) form the PUA domain.

This sequence belongs to the glutamate 5-kinase family.

Its subcellular location is the cytoplasm. It catalyses the reaction L-glutamate + ATP = L-glutamyl 5-phosphate + ADP. Its pathway is amino-acid biosynthesis; L-proline biosynthesis; L-glutamate 5-semialdehyde from L-glutamate: step 1/2. In terms of biological role, catalyzes the transfer of a phosphate group to glutamate to form L-glutamate 5-phosphate. The sequence is that of Glutamate 5-kinase from Cronobacter sakazakii (strain ATCC BAA-894) (Enterobacter sakazakii).